The chain runs to 312 residues: Glycerol-3-phosphate dehydrogenase [NAD(P)+] (312 aa).

Residues Trp11, Arg30, Arg31, and Lys95 each contribute to the NADPH site. Positions 95, 123, and 125 each coordinate sn-glycerol 3-phosphate. NADPH is bound at residue Ala127. Sn-glycerol 3-phosphate contacts are provided by Lys177, Asp230, Ser240, Arg241, and Asn242. The Proton acceptor role is filled by Lys177. Arg241 contributes to the NADPH binding site. Residues Val265 and Glu267 each contribute to the NADPH site.

It belongs to the NAD-dependent glycerol-3-phosphate dehydrogenase family.

The protein localises to the cytoplasm. It catalyses the reaction sn-glycerol 3-phosphate + NAD(+) = dihydroxyacetone phosphate + NADH + H(+). The catalysed reaction is sn-glycerol 3-phosphate + NADP(+) = dihydroxyacetone phosphate + NADPH + H(+). It participates in membrane lipid metabolism; glycerophospholipid metabolism. Its function is as follows. Catalyzes the reduction of the glycolytic intermediate dihydroxyacetone phosphate (DHAP) to sn-glycerol 3-phosphate (G3P), the key precursor for phospholipid synthesis. The sequence is that of Glycerol-3-phosphate dehydrogenase [NAD(P)+] from Helicobacter acinonychis (strain Sheeba).